The primary structure comprises 718 residues: Polyribonucleotide nucleotidyltransferase (718 aa).

The Mg(2+) site is built by aspartate 497 and aspartate 503. The KH domain maps to 564 to 623 (PRLLTMKIDPEQIGLVIGPGGKTIKGITEQTGSKIDIADDGTVTIAALEAEKAEKAKQII). The S1 motif domain maps to 633-701 (GEVYMGRVTR…AKGRLNLTRL (69 aa)).

It belongs to the polyribonucleotide nucleotidyltransferase family. Mg(2+) serves as cofactor.

It is found in the cytoplasm. The enzyme catalyses RNA(n+1) + phosphate = RNA(n) + a ribonucleoside 5'-diphosphate. In terms of biological role, involved in mRNA degradation. Catalyzes the phosphorolysis of single-stranded polyribonucleotides processively in the 3'- to 5'-direction. The sequence is that of Polyribonucleotide nucleotidyltransferase from Rippkaea orientalis (strain PCC 8801 / RF-1) (Cyanothece sp. (strain PCC 8801)).